The chain runs to 351 residues: Photosystem II D2 protein (351 aa).

A helical membrane pass occupies residues 39–59 (CAYMAIGGWLTGTTFATSWYT). Position 116 (H116) interacts with chlorophyll a. The helical transmembrane segment at 123-139 (GFMLRQFEIARLVGVRP) threads the bilayer. Pheophytin a contacts are provided by Q128 and N141. A helical transmembrane segment spans residues 151–164 (LFVSVFLIYPLGQS). A chlorophyll a-binding site is contributed by H196. Residues 206-226 (GALLCAIHGATVENTLFEDGD) traverse the membrane as a helical segment. Residues H213 and F260 each contribute to the a plastoquinone site. H213 is a Fe cation binding site. H267 is a binding site for Fe cation. The helical transmembrane segment at 277-293 (GLWMSAIGVVGLALNLR) threads the bilayer.

This sequence belongs to the reaction center PufL/M/PsbA/D family. PSII is composed of 1 copy each of membrane proteins PsbA, PsbB, PsbC, PsbD, PsbE, PsbF, PsbH, PsbI, PsbJ, PsbK, PsbL, PsbM, PsbT, PsbX, PsbY, PsbZ, Psb30/Ycf12, peripheral proteins PsbO, CyanoQ (PsbQ), PsbU, PsbV and a large number of cofactors. It forms dimeric complexes. The cofactor is The D1/D2 heterodimer binds P680, chlorophylls that are the primary electron donor of PSII, and subsequent electron acceptors. It shares a non-heme iron and each subunit binds pheophytin, quinone, additional chlorophylls, carotenoids and lipids. There is also a Cl(-1) ion associated with D1 and D2, which is required for oxygen evolution. The PSII complex binds additional chlorophylls, carotenoids and specific lipids..

It localises to the cellular thylakoid membrane. It catalyses the reaction 2 a plastoquinone + 4 hnu + 2 H2O = 2 a plastoquinol + O2. Functionally, photosystem II (PSII) is a light-driven water:plastoquinone oxidoreductase that uses light energy to abstract electrons from H(2)O, generating O(2) and a proton gradient subsequently used for ATP formation. It consists of a core antenna complex that captures photons, and an electron transfer chain that converts photonic excitation into a charge separation. The D1/D2 (PsbA/PsbD) reaction center heterodimer binds P680, the primary electron donor of PSII as well as several subsequent electron acceptors. D2 is needed for assembly of a stable PSII complex. This chain is Photosystem II D2 protein, found in Prochlorothrix hollandica.